A 314-amino-acid chain; its full sequence is Fructose-1,6-bisphosphatase class 1 (314 aa).

Mg(2+) is bound by residues E91, D112, L114, and D115. Substrate contacts are provided by residues 115-118 (DGSS), Y223, and K254. Position 260 (E260) interacts with Mg(2+).

It belongs to the FBPase class 1 family. As to quaternary structure, homotetramer. Requires Mg(2+) as cofactor.

The protein localises to the cytoplasm. It catalyses the reaction beta-D-fructose 1,6-bisphosphate + H2O = beta-D-fructose 6-phosphate + phosphate. Its pathway is carbohydrate biosynthesis; gluconeogenesis. The sequence is that of Fructose-1,6-bisphosphatase class 1 from Geobacter metallireducens (strain ATCC 53774 / DSM 7210 / GS-15).